A 1236-amino-acid chain; its full sequence is DNA-directed RNA polymerase II subunit RPB2 (1236 aa).

D846 serves as a coordination point for Mg(2+). Residues C1172, C1175, C1191, and C1194 each coordinate Zn(2+). The segment at 1172–1194 adopts a C4-type zinc-finger fold; the sequence is CGVCGLMSVIANLKKNQFECRSC.

Belongs to the RNA polymerase beta chain family. In terms of assembly, component of the RNA polymerase II (Pol II) complex consisting of 12 subunits.

It localises to the nucleus. It catalyses the reaction RNA(n) + a ribonucleoside 5'-triphosphate = RNA(n+1) + diphosphate. In terms of biological role, DNA-dependent RNA polymerase catalyzes the transcription of DNA into RNA using the four ribonucleoside triphosphates as substrates. Second largest component of RNA polymerase II which synthesizes mRNA precursors and many functional non-coding RNAs. Proposed to contribute to the polymerase catalytic activity and forms the polymerase active center together with the largest subunit. Pol II is the central component of the basal RNA polymerase II transcription machinery. It is composed of mobile elements that move relative to each other. RPB2 is part of the core element with the central large cleft, the clamp element that moves to open and close the cleft and the jaws that are thought to grab the incoming DNA template. This chain is DNA-directed RNA polymerase II subunit RPB2 (RPB2), found in Meyerozyma guilliermondii (strain ATCC 6260 / CBS 566 / DSM 6381 / JCM 1539 / NBRC 10279 / NRRL Y-324) (Yeast).